Here is a 1274-residue protein sequence, read N- to C-terminus: Regulator of telomere elongation helicase 1 (1274 aa).

Residues 7-296 (NGVTVDFPFQ…ARVAQHGELQ (290 aa)) form the Helicase ATP-binding domain. 42-49 (SPTGTGKT) serves as a coordination point for ATP. 4 residues coordinate [4Fe-4S] cluster: Cys-145, Cys-163, Cys-172, and Cys-207. The Nuclear localization signal signature appears at 151–167 (KKQESNHMQISLCRKKV). The DEAH box motif lies at 250–253 (DEAH). A Nuclear localization signal motif is present at residues 871–877 (QRGGKKK). Disordered stretches follow at residues 982-1002 (NSLPFGEQAQSTASKQGRREL), 1014-1038 (RQLDPGEHLNQGWPHLSTHLTSKGD), and 1143-1198 (ELPC…DDTI). Residues 1186 to 1196 (QRPDQSARSDD) show a composition bias toward basic and acidic residues.

The protein belongs to the helicase family. RAD3/XPD subfamily. In terms of assembly, interacts with TERF1. Interacts (via PIP-box) with PCNA; the interaction is direct and essential for suppressing telomere fragility. Interacts with MMS19; the interaction mediates the association of RTEL1 with the cytosolic iron-sulfur protein assembly (CIA) complex.

The protein localises to the nucleus. It catalyses the reaction ATP + H2O = ADP + phosphate + H(+). Functionally, a probable ATP-dependent DNA helicase implicated in telomere-length regulation, DNA repair and the maintenance of genomic stability. Acts as an anti-recombinase to counteract toxic recombination and limit crossover during meiosis. Regulates meiotic recombination and crossover homeostasis by physically dissociating strand invasion events and thereby promotes noncrossover repair by meiotic synthesis dependent strand annealing (SDSA) as well as disassembly of D loop recombination intermediates. Also disassembles T loops and prevents telomere fragility by counteracting telomeric G4-DNA structures, which together ensure the dynamics and stability of the telomere. The chain is Regulator of telomere elongation helicase 1 (Rtel1) from Rattus norvegicus (Rat).